The following is a 507-amino-acid chain: ATP synthase subunit alpha, chloroplastic (507 aa).

Gly170–Thr177 is a binding site for ATP.

Belongs to the ATPase alpha/beta chains family. As to quaternary structure, F-type ATPases have 2 components, CF(1) - the catalytic core - and CF(0) - the membrane proton channel. CF(1) has five subunits: alpha(3), beta(3), gamma(1), delta(1), epsilon(1). CF(0) has four main subunits: a, b, b' and c.

It is found in the plastid. It localises to the chloroplast thylakoid membrane. It catalyses the reaction ATP + H2O + 4 H(+)(in) = ADP + phosphate + 5 H(+)(out). Its function is as follows. Produces ATP from ADP in the presence of a proton gradient across the membrane. The alpha chain is a regulatory subunit. In Silene latifolia (White campion), this protein is ATP synthase subunit alpha, chloroplastic.